The sequence spans 353 residues: Alternative oxidase, mitochondrial (353 aa).

The tract at residues 25–45 (FRSTDDEDENNPSTELATDTT) is disordered. Polar residues predominate over residues 35–45 (NPSTELATDTT). A helical transmembrane segment spans residues 153–173 (FLFLESIAGVPGMVAGMIRHL). Positions 157, 196, and 199 each coordinate Fe cation. Residues 217-237 (LLIGQIIFYNLFFISYLISPA) traverse the membrane as a helical segment. Residues Glu-247, Glu-301, and His-304 each coordinate Fe cation.

The protein belongs to the alternative oxidase family. Fe cation is required as a cofactor.

Its subcellular location is the mitochondrion inner membrane. Its function is as follows. Catalyzes cyanide-resistant oxygen consumption. May increase respiration when the cytochrome respiratory pathway is restricted, or in response to low temperatures. In Yarrowia lipolytica (strain CLIB 122 / E 150) (Yeast), this protein is Alternative oxidase, mitochondrial (AOX).